Consider the following 161-residue polypeptide: Ribosomal RNA large subunit methyltransferase H (161 aa).

Residues L78, G110, and 129 to 134 contribute to the S-adenosyl-L-methionine site; that span reads LGRMTF.

It belongs to the RNA methyltransferase RlmH family. As to quaternary structure, homodimer.

Its subcellular location is the cytoplasm. The enzyme catalyses pseudouridine(1915) in 23S rRNA + S-adenosyl-L-methionine = N(3)-methylpseudouridine(1915) in 23S rRNA + S-adenosyl-L-homocysteine + H(+). In terms of biological role, specifically methylates the pseudouridine at position 1915 (m3Psi1915) in 23S rRNA. The protein is Ribosomal RNA large subunit methyltransferase H of Symbiobacterium thermophilum (strain DSM 24528 / JCM 14929 / IAM 14863 / T).